We begin with the raw amino-acid sequence, 230 residues long: Ribonuclease 3 (230 aa).

The 121-residue stretch at 5-125 (YSRLYKILGY…IIGAIYLDSD (121 aa)) folds into the RNase III domain. Residue glutamate 40 participates in Mg(2+) binding. Aspartate 44 is a catalytic residue. The Mg(2+) site is built by aspartate 111 and glutamate 114. Glutamate 114 is an active-site residue. In terms of domain architecture, DRBM spans 153–223 (DSKSKLQEIL…AEKMIQILSQ (71 aa)).

This sequence belongs to the ribonuclease III family. As to quaternary structure, homodimer. Mg(2+) serves as cofactor.

The protein resides in the cytoplasm. The enzyme catalyses Endonucleolytic cleavage to 5'-phosphomonoester.. Functionally, digests double-stranded RNA. Involved in the processing of primary rRNA transcript to yield the immediate precursors to the large and small rRNAs (23S and 16S). Processes some mRNAs, and tRNAs when they are encoded in the rRNA operon. Processes pre-crRNA and tracrRNA of type II CRISPR loci if present in the organism. This Francisella philomiragia subsp. philomiragia (strain ATCC 25017 / CCUG 19701 / FSC 153 / O#319-036) protein is Ribonuclease 3.